A 557-amino-acid polypeptide reads, in one-letter code: IgE-binding protein (557 aa).

A disordered region spans residues 113 to 172 (DGLGKPALSSSEAGEESSSEETDWEEEAAHYQPANWSRKKPKAAGEGQFADWPQGSRLQG). A compositionally biased stretch (acidic residues) spans 125–138 (AGEESSSEETDWEE). The Integrase catalytic domain occupies 344–534 (TAIRPGRRSR…TAAERHVQSQ (191 aa)).

This Mus musculus (Mouse) protein is IgE-binding protein (Iap).